The sequence spans 223 residues: Neurotrophic factor BDNF precursor form (223 aa).

The signal sequence occupies residues 1–5 (SCMKA). A propeptide spanning residues 6–114 (APMKEVSIRG…AANMSMRVRR (109 aa)) is cleaved from the precursor. Asn-107 carries an N-linked (GlcNAc...) asparagine glycan. 2 disulfides stabilise this stretch: Cys-127–Cys-194 and Cys-172–Cys-223.

It belongs to the NGF-beta family.

The protein localises to the secreted. Promotes the survival of neuronal populations that are all located either in the central nervous system or directly connected to it. The sequence is that of Neurotrophic factor BDNF precursor form (BDNF) from Boa constrictor (Boa).